A 158-amino-acid chain; its full sequence is Small ribosomal subunit protein uS9 (158 aa).

This sequence belongs to the universal ribosomal protein uS9 family.

The sequence is that of Small ribosomal subunit protein uS9 from Brucella canis (strain ATCC 23365 / NCTC 10854 / RM-666).